The following is a 1684-amino-acid chain: Latrophilin Cirl (1684 aa).

The Extracellular portion of the chain corresponds to 1–765 (MASNNYIQIM…LFTMFDGNMR (765 aa)). The 90-residue stretch at 21–110 (ACEGKKLTIE…KYLEAHYQCV (90 aa)) folds into the SUEL-type lectin domain. Asn-138, Asn-251, Asn-297, and Asn-336 each carry an N-linked (GlcNAc...) asparagine glycan. Residues 181–300 (PPATHATPPG…GPSVSSNGSA (120 aa)) form a disordered region. 2 stretches are compositionally biased toward polar residues: residues 250–260 (SNATAPSNTRI) and 278–300 (KSSP…NGSA). The interval 370-391 (SFDEDDEEMAGTSTTTPMSTSS) is disordered. Over residues 381–391 (TSTTTPMSTSS) the composition is skewed to low complexity. N-linked (GlcNAc...) asparagine glycosylation is found at Asn-396, Asn-653, Asn-701, and Asn-728. Positions 559–752 (RSVVQKVKNI…AILMDVVDEH (194 aa)) constitute a GAIN-B domain. Intrachain disulfides connect Cys-707/Cys-734 and Cys-722/Cys-736. A GPS region spans residues 707–752 (CVFWNYIDHAWSANGCSLESTNRTHSVCSCNHLTNFAILMDVVDEH). A helical membrane pass occupies residues 766-786 (IFIYISIAICVVFIVIALLTL). At 787–799 (KLFNGVFVKSART) the chain is on the cytoplasmic side. Residues 800-820 (SIYINIYICLLAIELLFLLGI) form a helical membrane-spanning segment. The Extracellular segment spans residues 821–826 (EQTETS). Residues 827–847 (IFCGFITVFLHCAILSGTSWF) traverse the membrane as a helical segment. Residues 848–873 (CYEAFHSYSTLTSDELLLEVDQTPKV) lie on the Cytoplasmic side of the membrane. A helical membrane pass occupies residues 874–894 (NCYYLLSYGLSLSVVAISLVI). Over 895–918 (NPSTYTQNDYCVLMEANAVFYATF) the chain is Extracellular. The helical transmembrane segment at 919 to 939 (VAPVLIFFMAAIGYTFLSWII) threads the bilayer. Residues 940 to 966 (MCRKSRTGLKTKEHTRLATVRFDIRCS) are Cytoplasmic-facing. Residues 967–987 (FVFFLLLSAVWCSAYFYLRGA) form a helical membrane-spanning segment. The Extracellular segment spans residues 988 to 994 (KMDEDVT). Residues 995 to 1015 (GIYGYNFICFNTLLGLYIFVF) form a helical membrane-spanning segment. Residues 1016–1684 (HCIQNEKIRR…VRCYLEPLAK (669 aa)) lie on the Cytoplasmic side of the membrane. Residues 1080 to 1100 (PLGTNDDAHDEQQQQQHMSAT) are disordered. 3 positions are modified to phosphoserine: Ser-1156, Ser-1247, and Ser-1254. Disordered regions lie at residues 1228–1255 (KPNS…LHSR), 1270–1353 (KTKP…APPP), 1441–1520 (SRYG…LPPQ), and 1587–1669 (SMRG…SAML). Low complexity predominate over residues 1298 to 1314 (QQQQQLRQQRQQQQQQL). Phosphoserine occurs at positions 1315 and 1316. Over residues 1328-1348 (LHLQHQQQQQQQRRAGGQQQL) the composition is skewed to low complexity. Residues 1455–1466 (RNQQQQQHSLAQ) are compositionally biased toward polar residues. 2 stretches are compositionally biased toward acidic residues: residues 1476–1489 (DEDD…EETT) and 1499–1512 (CDEE…DMED). Residues 1631-1654 (QQLQKLSPQSTTSSSSHTSHSNPH) show a composition bias toward low complexity.

Belongs to the G-protein coupled receptor 2 family. LN-TM7 subfamily. Forms a heterodimer, consisting of a large extracellular region non-covalently linked to a seven-transmembrane moiety. In terms of processing, proteolytically cleaved into 2 subunits, an extracellular subunit and a seven-transmembrane subunit.

It localises to the cell membrane. The sequence is that of Latrophilin Cirl from Drosophila persimilis (Fruit fly).